Reading from the N-terminus, the 383-residue chain is BRISC and BRCA1-A complex member 2 (383 aa).

Met1 carries the N-acetylmethionine modification. A Phosphoserine modification is found at Ser2. UEV-like stretches follow at residues 30–147 (DATN…TLLE) and 275–364 (IAAF…RAKA).

It belongs to the BABAM2 family. Component of the ARISC complex, at least composed of UIMC1/RAP80, ABRAXAS1, BRCC3/BRCC36, BABAM2 and BABAM1/NBA1. Component of the BRCA1-A complex, at least composed of BRCA1, BARD1, UIMC1/RAP80, ABRAXAS1, BRCC3/BRCC36, BABAM2 and BABAM1/NBA1. In the BRCA1-A complex, interacts directly with ABRAXAS1, BRCC3/BRCC36 and BABAM1/NBA1. Binds polyubiquitin. Component of the BRISC complex, at least composed of ABRAXAS2, BRCC3/BRCC36, BABAM2 and BABAM1/NBA1. Identified in a complex with SHMT2 and the other subunits of the BRISC complex. Component of the BRCA1/BRCA2 containing complex (BRCC), which also contains BRCA1, BRCA2, BARD1, BRCC3/BRCC36 and RAD51. BRCC is a ubiquitin E3 ligase complex that enhances cellular survival following DNA damage. May interact with FAS and TNFRSF1A.

The protein localises to the cytoplasm. It localises to the nucleus. Functionally, component of the BRCA1-A complex, a complex that specifically recognizes 'Lys-63'-linked ubiquitinated histones H2A and H2AX at DNA lesions sites, leading to target the BRCA1-BARD1 heterodimer to sites of DNA damage at double-strand breaks (DSBs). The BRCA1-A complex also possesses deubiquitinase activity that specifically removes 'Lys-63'-linked ubiquitin on histones H2A and H2AX. In the BRCA1-A complex, it acts as an adapter that bridges the interaction between BABAM1/NBA1 and the rest of the complex, thereby being required for the complex integrity and modulating the E3 ubiquitin ligase activity of the BRCA1-BARD1 heterodimer. Component of the BRISC complex, a multiprotein complex that specifically cleaves 'Lys-63'-linked ubiquitin in various substrates. Within the BRISC complex, acts as an adapter that bridges the interaction between BABAM1/NBA1 and the rest of the complex, thereby being required for the complex integrity. The BRISC complex is required for normal mitotic spindle assembly and microtubule attachment to kinetochores via its role in deubiquitinating NUMA1. The BRISC complex plays a role in interferon signaling via its role in the deubiquitination of the interferon receptor IFNAR1; deubiquitination increases IFNAR1 activity by enhancing its stability and cell surface expression. Down-regulates the response to bacterial lipopolysaccharide (LPS) via its role in IFNAR1 deubiquitination. May play a role in homeostasis or cellular differentiation in cells of neural, epithelial and germline origins. May also act as a death receptor-associated anti-apoptotic protein, which inhibits the mitochondrial apoptotic pathway. May regulate TNF-alpha signaling through its interactions with TNFRSF1A; however these effects may be indirect. The chain is BRISC and BRCA1-A complex member 2 (BABAM2) from Bos taurus (Bovine).